The sequence spans 577 residues: Proline--tRNA ligase (577 aa).

The protein belongs to the class-II aminoacyl-tRNA synthetase family. ProS type 1 subfamily. Homodimer.

It is found in the cytoplasm. The catalysed reaction is tRNA(Pro) + L-proline + ATP = L-prolyl-tRNA(Pro) + AMP + diphosphate. Functionally, catalyzes the attachment of proline to tRNA(Pro) in a two-step reaction: proline is first activated by ATP to form Pro-AMP and then transferred to the acceptor end of tRNA(Pro). As ProRS can inadvertently accommodate and process non-cognate amino acids such as alanine and cysteine, to avoid such errors it has two additional distinct editing activities against alanine. One activity is designated as 'pretransfer' editing and involves the tRNA(Pro)-independent hydrolysis of activated Ala-AMP. The other activity is designated 'posttransfer' editing and involves deacylation of mischarged Ala-tRNA(Pro). The misacylated Cys-tRNA(Pro) is not edited by ProRS. The chain is Proline--tRNA ligase from Thermotoga maritima (strain ATCC 43589 / DSM 3109 / JCM 10099 / NBRC 100826 / MSB8).